A 285-amino-acid polypeptide reads, in one-letter code: Putative phosphatase MG125 (285 aa).

Residue Asp-8 is the Nucleophile of the active site. Residue Asp-8 participates in Mg(2+) binding. Leu-9 is a binding site for phosphate. Residue Asp-10 coordinates Mg(2+). Phosphate is bound by residues 44 to 45 (TG) and Lys-205. 2 residues coordinate Mg(2+): Asp-228 and Ser-229. Asn-231 serves as a coordination point for phosphate.

Belongs to the HAD-like hydrolase superfamily. Cof family. Mg(2+) is required as a cofactor.

This is Putative phosphatase MG125 from Mycoplasma genitalium (strain ATCC 33530 / DSM 19775 / NCTC 10195 / G37) (Mycoplasmoides genitalium).